Here is a 460-residue protein sequence, read N- to C-terminus: Homocitrate synthase (460 aa).

The 256-residue stretch at 3–258 (VGILDSTLRE…IEVVKLNKLQ (256 aa)) folds into the Pyruvate carboxyltransferase domain. Arg-11 contributes to the 2-oxoglutarate binding site. Residue Glu-12 participates in Mg(2+) binding. 2-oxoglutarate-binding residues include His-75, Arg-135, and Thr-169. Residues His-197 and His-199 each coordinate Mg(2+). The Proton acceptor role is filled by His-291.

Belongs to the alpha-IPM synthase/homocitrate synthase family. Homocitrate synthase LYS20/LYS21 subfamily. As to quaternary structure, forms a homotetramer in the absence of lysine, and is in hexadecamer-octamer equilibrium in the presence of lysine. It depends on Mg(2+) as a cofactor. Requires Mn(2+) as cofactor.

It carries out the reaction acetyl-CoA + 2-oxoglutarate + H2O = (2R)-homocitrate + CoA + H(+). It participates in amino-acid biosynthesis; L-lysine biosynthesis via AAA pathway; L-alpha-aminoadipate from 2-oxoglutarate: step 1/5. With respect to regulation, inhibited by lysine. Functionally, catalyzes the aldol-type condensation of 2-oxoglutarate with acetyl-CoA to yield homocitrate. Carries out the first step of the alpha-aminoadipate (AAA) lysine biosynthesis pathway. This Sulfurisphaera tokodaii (strain DSM 16993 / JCM 10545 / NBRC 100140 / 7) (Sulfolobus tokodaii) protein is Homocitrate synthase.